A 281-amino-acid chain; its full sequence is Urease accessory protein UreD 2 (281 aa).

The protein belongs to the UreD family. UreD, UreF and UreG form a complex that acts as a GTP-hydrolysis-dependent molecular chaperone, activating the urease apoprotein by helping to assemble the nickel containing metallocenter of UreC. The UreE protein probably delivers the nickel.

It is found in the cytoplasm. Required for maturation of urease via the functional incorporation of the urease nickel metallocenter. This Pseudomonas syringae pv. tomato (strain ATCC BAA-871 / DC3000) protein is Urease accessory protein UreD 2.